Reading from the N-terminus, the 896-residue chain is Valine--tRNA ligase (896 aa).

The 'HIGH' region signature appears at 43-53; it reads PNVTGSLHIGH. The 'KMSKS' region motif lies at 545–549; sequence KMSKS. Lys548 provides a ligand contact to ATP. Residues 831–857 adopt a coiled-coil conformation; that stretch reads DLDAERARLAKGIAAAEKERDGLAARL.

This sequence belongs to the class-I aminoacyl-tRNA synthetase family. ValS type 1 subfamily. Monomer.

The protein localises to the cytoplasm. It catalyses the reaction tRNA(Val) + L-valine + ATP = L-valyl-tRNA(Val) + AMP + diphosphate. Catalyzes the attachment of valine to tRNA(Val). As ValRS can inadvertently accommodate and process structurally similar amino acids such as threonine, to avoid such errors, it has a 'posttransfer' editing activity that hydrolyzes mischarged Thr-tRNA(Val) in a tRNA-dependent manner. The sequence is that of Valine--tRNA ligase from Rhizorhabdus wittichii (strain DSM 6014 / CCUG 31198 / JCM 15750 / NBRC 105917 / EY 4224 / RW1) (Sphingomonas wittichii).